A 214-amino-acid polypeptide reads, in one-letter code: Ion-translocating oxidoreductase complex subunit G (214 aa).

Residues 13-33 (ALLLGLFALVGVGLVALVQQF) traverse the membrane as a helical segment. Residue Thr-180 is modified to FMN phosphoryl threonine.

This sequence belongs to the RnfG family. The complex is composed of six subunits: RnfA, RnfB, RnfC, RnfD, RnfE and RnfG. FMN serves as cofactor.

It is found in the cell inner membrane. In terms of biological role, part of a membrane-bound complex that couples electron transfer with translocation of ions across the membrane. This Pseudomonas aeruginosa (strain UCBPP-PA14) protein is Ion-translocating oxidoreductase complex subunit G.